Here is a 424-residue protein sequence, read N- to C-terminus: Histidine--tRNA ligase (424 aa).

The protein belongs to the class-II aminoacyl-tRNA synthetase family. In terms of assembly, homodimer.

The protein resides in the cytoplasm. It carries out the reaction tRNA(His) + L-histidine + ATP = L-histidyl-tRNA(His) + AMP + diphosphate + H(+). The sequence is that of Histidine--tRNA ligase from Shewanella piezotolerans (strain WP3 / JCM 13877).